The chain runs to 967 residues: Sulfite dehydrogenase subunit A (967 aa).

The 4Fe-4S Mo/W bis-MGD-type domain occupies Val15 to Gly71. 4 residues coordinate [4Fe-4S] cluster: Cys22, Cys25, Cys29, and Cys57.

It belongs to the prokaryotic molybdopterin-containing oxidoreductase family. In terms of assembly, forms a heterotrimeric membrane-bound complex composed of a catalytic heterodimer (SoeAB) and a membrane anchor protein (SoeC). Requires [4Fe-4S] cluster as cofactor. It depends on Mo-bis(molybdopterin guanine dinucleotide) as a cofactor.

Its subcellular location is the cell inner membrane. The catalysed reaction is a quinone + sulfite + H2O = a quinol + sulfate. It catalyses the reaction a menaquinone + sulfite + H2O = a menaquinol + sulfate. Part of the SoeABC complex that catalyzes the oxidation of sulfite to sulfate. The sequence is that of Sulfite dehydrogenase subunit A from Allochromatium vinosum (strain ATCC 17899 / DSM 180 / NBRC 103801 / NCIMB 10441 / D) (Chromatium vinosum).